Here is a 359-residue protein sequence, read N- to C-terminus: Type-1 angiotensin II receptor (359 aa).

The Extracellular segment spans residues 1–25 (MILNSSTEDGIKRIQDDCPKAGRHN). N-linked (GlcNAc...) asparagine glycosylation is present at asparagine 4. Angiotensin II is bound by residues glutamine 15 and aspartate 17. Cystine bridges form between cysteine 18–cysteine 274 and cysteine 101–cysteine 180. A helical transmembrane segment spans residues 26-55 (YIFVMIPTLYSIIFVVGIFGNSLVVIVIYF). The Cytoplasmic portion of the chain corresponds to 56 to 61 (YMKLKT). Residues 62-89 (VASVFLLNLALADLCFLLTLPLWAVYTA) form a helical membrane-spanning segment. Over 90-98 (MEYRWPFGN) the chain is Extracellular. A helical membrane pass occupies residues 99–125 (YLCKIASASVSFNLYASVFLLTCLSID). The Cytoplasmic segment spans residues 126-141 (RYLAIVHPMKSRLRRT). A helical transmembrane segment spans residues 142-165 (MLVAKVTCIIIWLLAGLASLPAII). The Extracellular portion of the chain corresponds to 166-190 (HRNVFFIENTNITVCAFHYESQNST). An angiotensin II-binding site is contributed by arginine 167. Asparagine 176 is a glycosylation site (N-linked (GlcNAc...) asparagine). Angiotensin II-binding residues include phenylalanine 182, histidine 183, and tyrosine 184. N-linked (GlcNAc...) asparagine glycosylation is present at asparagine 188. Residues 191–216 (LPIGLGLTKNILGFLFPFLIILTSYT) traverse the membrane as a helical segment. Position 199 (lysine 199) interacts with angiotensin II. Over 217–239 (LIWKALKKAYEIQKNKPRNDDIF) the chain is Cytoplasmic. A helical transmembrane segment spans residues 240–268 (KIIMAIVLFFFFSWIPHQIFTFLDVLIQL). Over 269–278 (GIIRDCRIAD) the chain is Extracellular. A helical transmembrane segment spans residues 279 to 304 (IVDTAMPITICIAYFNNCLNPLFYGF). Residues 305–359 (LGKKFKKYFLQLLKYIPPKAKSHSNLSTKMSTLSYRPSDNVSSSTKKPAPCFEVE) are Cytoplasmic-facing. Positions 335 to 350 (STLSYRPSDNVSSSTK) are enriched in polar residues. A disordered region spans residues 335-359 (STLSYRPSDNVSSSTKKPAPCFEVE). Cysteine 355 carries S-palmitoyl cysteine lipidation.

It belongs to the G-protein coupled receptor 1 family. As to quaternary structure, interacts with MAS1. Interacts with ARRB1. Interacts with FLNA (via filamin repeat 21); increases PKA-mediated phosphorylation of FLNA. Post-translationally, C-terminal Ser or Thr residues may be phosphorylated.

The protein localises to the cell membrane. Functionally, receptor for angiotensin II, a vasoconstricting peptide, which acts as a key regulator of blood pressure and sodium retention by the kidney. The activated receptor in turn couples to G-alpha proteins G(q) (GNAQ, GNA11, GNA14 or GNA15) and thus activates phospholipase C and increases the cytosolic Ca(2+) concentrations, which in turn triggers cellular responses such as stimulation of protein kinase C. This chain is Type-1 angiotensin II receptor (AGTR1), found in Pan troglodytes (Chimpanzee).